Here is an 896-residue protein sequence, read N- to C-terminus: Lipoxygenase 2, chloroplastic (896 aa).

Residues 1 to 56 (MYCRESLSSLQTLNVAKSLSSLFPKQSALINPISAGRRNNLPRPNLRRRCKVTASR) constitute a chloroplast transit peptide. Residues 79 to 199 (ITAQEEFLEG…VDPTKRIFFS (121 aa)) enclose the PLAT domain. Residues 175–232 (GSITFTCESWVAPKSVDPTKRIFFSDKSYLPSQTPEPLKKYRKEELETLQGKNREEVG) form an EIF4E2 binding region. In terms of domain architecture, Lipoxygenase spans 202–896 (SYLPSQTPEP…GMGVPYSISI (695 aa)). Residues histidine 554, histidine 559, histidine 746, asparagine 750, and isoleucine 896 each coordinate Fe cation.

The protein belongs to the lipoxygenase family. In terms of assembly, interacts with EIF4E2. The cofactor is Fe cation. As to expression, in leaves and inflorescences but not abundant in seeds, roots and stems.

The protein localises to the plastid. It localises to the chloroplast. It is found in the cytoplasm. The catalysed reaction is (9Z,12Z)-octadecadienoate + O2 = (13S)-hydroperoxy-(9Z,11E)-octadecadienoate. The enzyme catalyses (9Z,12Z,15Z)-octadecatrienoate + O2 = (13S)-hydroperoxy-(9Z,11E,15Z)-octadecatrienoate. It functions in the pathway lipid metabolism; oxylipin biosynthesis. In terms of biological role, 13S-lipoxygenase that can use linolenic acid as substrates. Plant lipoxygenases may be involved in a number of diverse aspects of plant physiology including growth and development, pest resistance, and senescence or responses to wounding. Catalyzes the hydroperoxidation of lipids containing a cis,cis-1,4-pentadiene structure. Required for the wound-induced synthesis of jasmonic acid (JA) in leaves. The protein is Lipoxygenase 2, chloroplastic (LOX2) of Arabidopsis thaliana (Mouse-ear cress).